Reading from the N-terminus, the 500-residue chain is Aspartyl/glutamyl-tRNA(Asn/Gln) amidotransferase subunit B (500 aa).

It belongs to the GatB/GatE family. GatB subfamily. As to quaternary structure, heterotrimer of A, B and C subunits.

The enzyme catalyses L-glutamyl-tRNA(Gln) + L-glutamine + ATP + H2O = L-glutaminyl-tRNA(Gln) + L-glutamate + ADP + phosphate + H(+). The catalysed reaction is L-aspartyl-tRNA(Asn) + L-glutamine + ATP + H2O = L-asparaginyl-tRNA(Asn) + L-glutamate + ADP + phosphate + 2 H(+). Allows the formation of correctly charged Asn-tRNA(Asn) or Gln-tRNA(Gln) through the transamidation of misacylated Asp-tRNA(Asn) or Glu-tRNA(Gln) in organisms which lack either or both of asparaginyl-tRNA or glutaminyl-tRNA synthetases. The reaction takes place in the presence of glutamine and ATP through an activated phospho-Asp-tRNA(Asn) or phospho-Glu-tRNA(Gln). The sequence is that of Aspartyl/glutamyl-tRNA(Asn/Gln) amidotransferase subunit B from Rhizobium johnstonii (strain DSM 114642 / LMG 32736 / 3841) (Rhizobium leguminosarum bv. viciae).